Reading from the N-terminus, the 169-residue chain is Der GTPase-activating protein YihI (169 aa).

Disordered stretches follow at residues 1-75 (MKPS…IPLG) and 144-169 (GLSY…LRGN). Positions 10–19 (SKGHAKARRK) are enriched in basic residues. The segment covering 20-30 (TREELDQEARD) has biased composition (basic and acidic residues). Over residues 31-40 (RKRQKKRRGH) the composition is skewed to basic residues. Positions 49 to 58 (GNTTSGSKGQ) are enriched in polar residues. Residues 147 to 159 (YDDDEEEEEDEKQ) show a composition bias toward acidic residues. Basic and acidic residues predominate over residues 160–169 (EDMMRLLRGN).

The protein belongs to the YihI family. In terms of assembly, interacts with Der.

In terms of biological role, a GTPase-activating protein (GAP) that modifies Der/EngA GTPase function. May play a role in ribosome biogenesis. This Escherichia coli (strain 55989 / EAEC) protein is Der GTPase-activating protein YihI.